A 658-amino-acid polypeptide reads, in one-letter code: Threonine--tRNA ligase (658 aa).

The TGS domain maps to 1 to 64 (MSNTVSLQFP…GASGKLEIIT (64 aa)). The segment at 246–548 (DHRRLGREMD…LIENFAGHMP (303 aa)) is catalytic. Zn(2+) contacts are provided by C343, H394, and H525.

Belongs to the class-II aminoacyl-tRNA synthetase family. In terms of assembly, homodimer. It depends on Zn(2+) as a cofactor.

The protein localises to the cytoplasm. It carries out the reaction tRNA(Thr) + L-threonine + ATP = L-threonyl-tRNA(Thr) + AMP + diphosphate + H(+). Catalyzes the attachment of threonine to tRNA(Thr) in a two-step reaction: L-threonine is first activated by ATP to form Thr-AMP and then transferred to the acceptor end of tRNA(Thr). Also edits incorrectly charged L-seryl-tRNA(Thr). In Brucella abortus (strain S19), this protein is Threonine--tRNA ligase.